A 150-amino-acid chain; its full sequence is Ribosome maturation factor RimP (150 aa).

The protein belongs to the RimP family.

It is found in the cytoplasm. Required for maturation of 30S ribosomal subunits. The chain is Ribosome maturation factor RimP from Francisella tularensis subsp. holarctica (strain LVS).